The primary structure comprises 352 residues: Endoplasmic reticulum GDP-fucose transporter (352 aa).

Transmembrane regions (helical) follow at residues 9–29 (LGMLFVFIGCCSNVVFLELII), 34–54 (GAGNLITFAQFLFIALEGLVF), 70–90 (YVILVALFFGANVCNNYAFNF), 96–116 (LHMIFRSGSLMANMIMGIVLL), 126–146 (SSVAMITAGIILCTLVSSGDV), 163–183 (FFWWTVGIGLLTIALLVTAYM), 201–221 (ALFFTHMLPLPGFLIMAGNIV), 249–271 (LMLFYLLCNVVTQYVCISAVYVL), 276–298 (ASLTVTLVVTLRKFVSLLFSIIY), and 305–325 (LNHWVGTILVFFGTILFANVI). The short motif at 350–352 (KVE) is the Prevents secretion from ER element.

This sequence belongs to the nucleotide-sugar transporter family. SLC35B subfamily.

The protein resides in the endoplasmic reticulum membrane. Sugar transporter that specifically mediates the transport of UDP-N-acetylglucosamine (UDP-GlcNAc), GDP-fucose and UDP-xylose. Functions redundantly with Gfr in the O-fucosylation of Notch, positively regulating Notch signaling. Involved in the biosynthesis of heparan sulfate-glycosaminoglycan (HS-GAG) and in Dpp signaling in the wing imaginal disk. This is Endoplasmic reticulum GDP-fucose transporter from Drosophila melanogaster (Fruit fly).